Reading from the N-terminus, the 355-residue chain is Chorismate synthase (355 aa).

Residue Arg-48 coordinates NADP(+). Residues 125-127 (RSS), 239-240 (NA), Gly-280, 295-299 (KPVAT), and Arg-321 contribute to the FMN site.

Belongs to the chorismate synthase family. Homotetramer. The cofactor is FMNH2.

It carries out the reaction 5-O-(1-carboxyvinyl)-3-phosphoshikimate = chorismate + phosphate. Its pathway is metabolic intermediate biosynthesis; chorismate biosynthesis; chorismate from D-erythrose 4-phosphate and phosphoenolpyruvate: step 7/7. Catalyzes the anti-1,4-elimination of the C-3 phosphate and the C-6 proR hydrogen from 5-enolpyruvylshikimate-3-phosphate (EPSP) to yield chorismate, which is the branch point compound that serves as the starting substrate for the three terminal pathways of aromatic amino acid biosynthesis. This reaction introduces a second double bond into the aromatic ring system. This Flavobacterium psychrophilum (strain ATCC 49511 / DSM 21280 / CIP 103535 / JIP02/86) protein is Chorismate synthase.